The sequence spans 412 residues: Thyroxine-binding globulin (412 aa).

Positions 1–16 (MPLFLYMVLLVLGIHC) are cleaved as a signal peptide. Residues N20, N35, N98, N164, and N252 are each glycosylated (N-linked (GlcNAc...) asparagine). 2 residues coordinate thyroxine: N292 and K395.

It belongs to the serpin family. Expressed by the liver and secreted in plasma.

Its subcellular location is the secreted. Functionally, major thyroid hormone transport protein in serum. The sequence is that of Thyroxine-binding globulin (SERPINA7) from Sus scrofa (Pig).